The chain runs to 651 residues: ATP-dependent zinc metalloprotease FtsH (651 aa).

At 1–134 the chain is on the extracellular side; sequence MIVFATILFG…FTTDPQTAGP (134 aa). The helical transmembrane segment at 135–155 threads the bilayer; the sequence is WARAIAVMAPFVLILLLFFLM. Topologically, residues 156 to 651 are cytoplasmic; sequence TRTGRSASQS…PAMSVNGHRG (496 aa). 229-236 serves as a coordination point for ATP; it reads GPPGTGKT. Position 451 (His-451) interacts with Zn(2+). The active site involves Glu-452. Residues His-455 and Asp-527 each contribute to the Zn(2+) site.

The protein in the central section; belongs to the AAA ATPase family. This sequence in the C-terminal section; belongs to the peptidase M41 family. Homohexamer. Requires Zn(2+) as cofactor.

The protein localises to the cell membrane. Its function is as follows. Acts as a processive, ATP-dependent zinc metallopeptidase for both cytoplasmic and membrane proteins. Plays a role in the quality control of integral membrane proteins. The protein is ATP-dependent zinc metalloprotease FtsH of Rubrobacter xylanophilus (strain DSM 9941 / JCM 11954 / NBRC 16129 / PRD-1).